The primary structure comprises 409 residues: Phosphatidylglycerol--prolipoprotein diacylglyceryl transferase (409 aa).

4 helical membrane passes run 18–38 (PVPLRAYALMIIIGVFVAVFV), 48–68 (MDPMVASEVAYWAVPFGIVGA), 93–113 (IWNGGLGIWGAIAGGAFGAWL), and 119–139 (GISLALFGDAAAPGIILAQAI). Arg141 lines the a 1,2-diacyl-sn-glycero-3-phospho-(1'-sn-glycerol) pocket. The next 2 helical transmembrane spans lie at 177 to 197 (QPTFLYECLWNLVVAGILLVV) and 234 to 254 (ILGLRVNIWTSIVVCLGALLA). A disordered region spans residues 273-409 (ALGIARSRPA…AVPPEEPQLP (137 aa)). 3 stretches are compositionally biased toward low complexity: residues 297 to 309 (AAAPDSAGPDSAA), 320 to 335 (PDLGGPDPADPGSAGS), and 348 to 375 (TATTATTATTATTATTATTATTATTATT).

Belongs to the Lgt family.

The protein resides in the cell membrane. The enzyme catalyses L-cysteinyl-[prolipoprotein] + a 1,2-diacyl-sn-glycero-3-phospho-(1'-sn-glycerol) = an S-1,2-diacyl-sn-glyceryl-L-cysteinyl-[prolipoprotein] + sn-glycerol 1-phosphate + H(+). It participates in protein modification; lipoprotein biosynthesis (diacylglyceryl transfer). Functionally, catalyzes the transfer of the diacylglyceryl group from phosphatidylglycerol to the sulfhydryl group of the N-terminal cysteine of a prolipoprotein, the first step in the formation of mature lipoproteins. This Frankia casuarinae (strain DSM 45818 / CECT 9043 / HFP020203 / CcI3) protein is Phosphatidylglycerol--prolipoprotein diacylglyceryl transferase.